Here is a 68-residue protein sequence, read N- to C-terminus: Adipokinetic prohormone type 1 (68 aa).

A signal peptide spans 1 to 20 (MNKIYFVIVFVACFCLFAEA). A Pyrrolidone carboxylic acid modification is found at Q21. G30 is modified (glycine amide). Positions 34-68 (SGVAPMSCKNEEAVATIFKLIQNEAERFIICQQKS) are excised as a propeptide.

As to expression, expressed in antennal lobe (AL), corpora cardiaca (CC), corpora allata (CA) and gnathal ganglion (GNG) (at protein level). Expression in CC and CA detected in all animals, expression in GNG in some animals and in AL in few animals (at protein level).

The protein localises to the secreted. Functionally, this hormone, released from cells in the corpora cardiaca, causes release of diglycerides from the fat body and stimulation of muscles to use these diglycerides as an energy source during energy-demanding processes. The sequence is that of Adipokinetic prohormone type 1 from Agrotis ipsilon (Black cutworm moth).